The following is a 421-amino-acid chain: Gamma-glutamyl phosphate reductase (421 aa).

Belongs to the gamma-glutamyl phosphate reductase family.

It localises to the cytoplasm. It carries out the reaction L-glutamate 5-semialdehyde + phosphate + NADP(+) = L-glutamyl 5-phosphate + NADPH + H(+). Its pathway is amino-acid biosynthesis; L-proline biosynthesis; L-glutamate 5-semialdehyde from L-glutamate: step 2/2. In terms of biological role, catalyzes the NADPH-dependent reduction of L-glutamate 5-phosphate into L-glutamate 5-semialdehyde and phosphate. The product spontaneously undergoes cyclization to form 1-pyrroline-5-carboxylate. This chain is Gamma-glutamyl phosphate reductase, found in Brucella suis biovar 1 (strain 1330).